Here is a 340-residue protein sequence, read N- to C-terminus: Glycerol-3-phosphate dehydrogenase [NAD(P)+] (340 aa).

Positions 14, 15, 35, and 108 each coordinate NADPH. Lys-108 and Gly-136 together coordinate sn-glycerol 3-phosphate. NADPH is bound at residue Ala-140. Sn-glycerol 3-phosphate contacts are provided by Lys-191, Asp-244, Ser-254, Arg-255, and Asn-256. The Proton acceptor role is filled by Lys-191. Arg-255 is an NADPH binding site. Glu-281 is a binding site for NADPH.

Belongs to the NAD-dependent glycerol-3-phosphate dehydrogenase family.

Its subcellular location is the cytoplasm. It carries out the reaction sn-glycerol 3-phosphate + NAD(+) = dihydroxyacetone phosphate + NADH + H(+). The enzyme catalyses sn-glycerol 3-phosphate + NADP(+) = dihydroxyacetone phosphate + NADPH + H(+). It participates in membrane lipid metabolism; glycerophospholipid metabolism. Its function is as follows. Catalyzes the reduction of the glycolytic intermediate dihydroxyacetone phosphate (DHAP) to sn-glycerol 3-phosphate (G3P), the key precursor for phospholipid synthesis. This Pseudomonas aeruginosa (strain LESB58) protein is Glycerol-3-phosphate dehydrogenase [NAD(P)+].